The following is a 358-amino-acid chain: Protein ocs (358 aa).

The protein belongs to the lysopine/nopaline/octopine/opine/vitopine dehydrogenases family. Monomer.

The catalysed reaction is D-octopine + NAD(+) + H2O = L-arginine + pyruvate + NADH + H(+). It catalyses the reaction D-lysopine + NADP(+) + H2O = L-lysine + pyruvate + NADPH + H(+). In terms of biological role, reductive condensation of pyruvate and arginine, lysine, histidine, or octopine to form octopine, lysopine, histopine, or octopinic acid, respectively. NADPH is the preferred cofactor, but NADH can also be used. This chain is Protein ocs (ocs), found in Agrobacterium tumefaciens (strain Ach5).